Here is a 235-residue protein sequence, read N- to C-terminus: MNDADVSKQIQQMVRFIRQEAEEKANEISISAEEEFNIERLQLLESAKRKLRQDYDRKLKQVDIRKRIDYSTQLNASRIKYLQAQDDVVTAMKDSAAKDLLRVSNDKNNYKKLLKSLIIESLLRLKEPSVLLRCREMDKKVVESVIEDAKRQYAEKAKVGSPKITIDEKVFLPPPPNPKLPDSHDPHCSGGVVLASQDGKIVCENTLDARLDVAFRQKLPQIRTRLVGAPETSRA.

An N-acetylmethionine modification is found at Met-1. The stretch at 8-64 (KQIQQMVRFIRQEAEEKANEISISAEEEFNIERLQLLESAKRKLRQDYDRKLKQVDI) forms a coiled coil.

This sequence belongs to the V-ATPase E subunit family. As to quaternary structure, V-ATPase is a heteromultimeric enzyme composed of a peripheral catalytic V1 complex (components A to H) attached to an integral membrane V0 proton pore complex (components: a, c, c'', d and e).

The protein localises to the vacuole membrane. Subunit of the peripheral V1 complex of vacuolar ATPase essential for assembly or catalytic function. V-ATPase is responsible for acidifying a variety of intracellular compartments in eukaryotic cells. The polypeptide is V-type proton ATPase subunit E2 (VHA-E2) (Arabidopsis thaliana (Mouse-ear cress)).